Here is a 633-residue protein sequence, read N- to C-terminus: Proline-rich protein LAS17 (633 aa).

The 112-residue stretch at 16-127 (LPKASNKIID…KRVQKRERYA (112 aa)) folds into the WH1 domain. Disordered regions lie at residues 145 to 545 (REEQ…TTGD) and 563 to 606 (ALRK…PASL). Residues 192-215 (AETFDSDQTSSFSDINSTTASAPT) are compositionally biased toward low complexity. Pro residues-rich tracts occupy residues 216–225 (TPAPALPPAS) and 238–256 (SLPP…PQHN). 2 stretches are compositionally biased toward low complexity: residues 257–269 (SPPQ…QPQS) and 307–322 (PQQN…RNNR). T334 bears the Phosphothreonine mark. A Phosphoserine modification is found at S337. Positions 342 to 357 (PAPPPPPRRGPAPPPP) are enriched in pro residues. 3 stretches are compositionally biased toward polar residues: residues 363-376 (TSNT…NSLL), 399-414 (NVTM…NSNR), and 454-465 (PQNTQAPSQATN). Positions 479 to 488 (QSQIPQSAPS) are enriched in low complexity. A WH2 domain is found at 547–567 (GRDALLASIRGAGGIGALRKV). A Phosphoserine modification is found at S588.

Interacts with KRE6, LSB3, LSB5 and YSC84.

This Saccharomyces cerevisiae (strain ATCC 204508 / S288c) (Baker's yeast) protein is Proline-rich protein LAS17 (LAS17).